We begin with the raw amino-acid sequence, 750 residues long: Protein psiO (750 aa).

Positions 1-22 are cleaved as a signal peptide; the sequence is MKEKIKLSLLILTSIILAVANS. Topologically, residues 23–688 are extracellular; the sequence is QTQPKTLAMT…GCNTAAVVST (666 aa). Asparagine 129 is a glycosylation site (N-linked (GlcNAc...) asparagine). A PA14 domain is found at 140–286; that stretch reads QEYFPINGKG…DDYCGVCNGD (147 aa). 5 N-linked (GlcNAc...) asparagine glycosylation sites follow: asparagine 447, asparagine 506, asparagine 554, asparagine 571, and asparagine 659. A helical membrane pass occupies residues 689–709; the sequence is AVIAGVTVAAVVGLGIFLYGG. Residues 710–750 are Cytoplasmic-facing; that stretch reads KKGYDYYQDNKSKGMTGANSNPLYKESGNAGQNPLYNDNNL. The interval 727 to 750 is disordered; that stretch reads ANSNPLYKESGNAGQNPLYNDNNL. Positions 738-750 are enriched in polar residues; it reads NAGQNPLYNDNNL.

It belongs to the prespore-cell-inducing factor family.

It is found in the membrane. The sequence is that of Protein psiO (psiO) from Dictyostelium discoideum (Social amoeba).